Here is a 485-residue protein sequence, read N- to C-terminus: Aspartyl/glutamyl-tRNA(Asn/Gln) amidotransferase subunit B (485 aa).

Belongs to the GatB/GatE family. GatB subfamily. As to quaternary structure, heterotrimer of A, B and C subunits.

It catalyses the reaction L-glutamyl-tRNA(Gln) + L-glutamine + ATP + H2O = L-glutaminyl-tRNA(Gln) + L-glutamate + ADP + phosphate + H(+). The enzyme catalyses L-aspartyl-tRNA(Asn) + L-glutamine + ATP + H2O = L-asparaginyl-tRNA(Asn) + L-glutamate + ADP + phosphate + 2 H(+). Functionally, allows the formation of correctly charged Asn-tRNA(Asn) or Gln-tRNA(Gln) through the transamidation of misacylated Asp-tRNA(Asn) or Glu-tRNA(Gln) in organisms which lack either or both of asparaginyl-tRNA or glutaminyl-tRNA synthetases. The reaction takes place in the presence of glutamine and ATP through an activated phospho-Asp-tRNA(Asn) or phospho-Glu-tRNA(Gln). The sequence is that of Aspartyl/glutamyl-tRNA(Asn/Gln) amidotransferase subunit B from Cupriavidus pinatubonensis (strain JMP 134 / LMG 1197) (Cupriavidus necator (strain JMP 134)).